The primary structure comprises 347 residues: Sensor protein VraS (347 aa).

2 helical membrane passes run 13–33 and 43–63; these read ILVY…VNII and IFGI…CIIV. The region spanning 150 to 341 is the Histidine kinase domain; sequence RLARELHDSV…RIEVKAPLNK (192 aa). H156 bears the Phosphohistidine mark.

In terms of processing, autophosphorylated on His-156.

Its subcellular location is the cell membrane. The enzyme catalyses ATP + protein L-histidine = ADP + protein N-phospho-L-histidine.. Member of the two-component regulatory system PprA/PprB involved in biofilm formation by controlling the expression of many related genes including type IVb pili major subunit flp pilin, adhesin bapA or cupE fimbriae. Also modulates quorum-sensing signal production acting on both negative and positive modulators. Functions as a heme sensor histidine kinase which is autophosphorylated at a histidine residue and transfers its phosphate group to PprB. This is Sensor protein VraS (vraS) from Staphylococcus aureus (strain COL).